Here is a 150-residue protein sequence, read N- to C-terminus: Endoribonuclease YbeY (150 aa).

Zn(2+) contacts are provided by histidine 102, histidine 106, and histidine 112.

This sequence belongs to the endoribonuclease YbeY family. Zn(2+) serves as cofactor.

The protein localises to the cytoplasm. Functionally, single strand-specific metallo-endoribonuclease involved in late-stage 70S ribosome quality control and in maturation of the 3' terminus of the 16S rRNA. This is Endoribonuclease YbeY from Thermotoga sp. (strain RQ2).